The chain runs to 335 residues: Beta-1,4-mannooligosaccharide phosphorylase (335 aa).

It belongs to the glycosyl hydrolase 130 family. As to quaternary structure, homohexamer in solution.

It catalyses the reaction [(1-&gt;4)-beta-D-mannosyl](n) + phosphate = [(1-&gt;4)-beta-D-mannosyl](n-1) + alpha-D-mannose 1-phosphate. Catalyzes the phosphorolysis of beta-1,4-mannooligosaccharides to mannose 1-phosphate (Man1P) and shorter mannooligosaccharides. Can also catalyze the phosphorolysis of 4-O-beta-D-mannopyranosyl-D-glucopyranose (Man-Glc), but shows higher activity toward longer mannooligosaccharides. Involved in a mannan catabolic pathway which feeds into glycolysis. This is Beta-1,4-mannooligosaccharide phosphorylase from Ruminococcus albus (strain ATCC 27210 / DSM 20455 / JCM 14654 / NCDO 2250 / 7).